The chain runs to 336 residues: tRNA N6-adenosine threonylcarbamoyltransferase (336 aa).

Fe cation contacts are provided by H114 and H118. Substrate contacts are provided by residues 136 to 140 (LVSGG), D169, G182, D186, and N275. D301 is a Fe cation binding site.

It belongs to the KAE1 / TsaD family. The cofactor is Fe(2+).

Its subcellular location is the cytoplasm. It catalyses the reaction L-threonylcarbamoyladenylate + adenosine(37) in tRNA = N(6)-L-threonylcarbamoyladenosine(37) in tRNA + AMP + H(+). In terms of biological role, required for the formation of a threonylcarbamoyl group on adenosine at position 37 (t(6)A37) in tRNAs that read codons beginning with adenine. Is involved in the transfer of the threonylcarbamoyl moiety of threonylcarbamoyl-AMP (TC-AMP) to the N6 group of A37, together with TsaE and TsaB. TsaD likely plays a direct catalytic role in this reaction. This is tRNA N6-adenosine threonylcarbamoyltransferase from Streptococcus mutans serotype c (strain ATCC 700610 / UA159).